The sequence spans 426 residues: Glutamyl-tRNA reductase (426 aa).

Substrate contacts are provided by residues 49 to 52 (TCNR), serine 109, 114 to 116 (EGQ), and glutamine 120. The active-site Nucleophile is cysteine 50. 189-194 (GAGETG) lines the NADP(+) pocket.

It belongs to the glutamyl-tRNA reductase family. As to quaternary structure, homodimer.

The enzyme catalyses (S)-4-amino-5-oxopentanoate + tRNA(Glu) + NADP(+) = L-glutamyl-tRNA(Glu) + NADPH + H(+). The protein operates within porphyrin-containing compound metabolism; protoporphyrin-IX biosynthesis; 5-aminolevulinate from L-glutamyl-tRNA(Glu): step 1/2. It functions in the pathway porphyrin-containing compound metabolism; chlorophyll biosynthesis. Its function is as follows. Catalyzes the NADPH-dependent reduction of glutamyl-tRNA(Glu) to glutamate 1-semialdehyde (GSA). The protein is Glutamyl-tRNA reductase of Chlorobium phaeobacteroides (strain BS1).